Consider the following 343-residue polypeptide: Cysteine proteinase 1 (343 aa).

Residues Met1–Ser18 form the signal peptide. Residues Arg19–Ser117 constitute a propeptide, activation peptide. 3 disulfides stabilise this stretch: Cys139–Cys190, Cys173–Cys224, and Cys279–Cys332. The active site involves Cys142. Residues His286 and Asn311 contribute to the active site.

This sequence belongs to the peptidase C1 family. In terms of processing, phosphoglycosylated, contains GlcNAc-alpha-1-P-Ser residues.

It localises to the lysosome. Functionally, cysteine proteinases 1 and 2 are believed to participate in the breakdown of protein during differentiation of Dictyostelium as a response to starvation. This is Cysteine proteinase 1 (cprA) from Dictyostelium discoideum (Social amoeba).